The primary structure comprises 234 residues: Homeobox protein ceh-51 (234 aa).

Disordered regions lie at residues 128–154 (PPSF…RTPF) and 209–234 (QIKQ…HVIS). Positions 147–206 (RRGARTPFSDSQLYALRTRFEQCDTIKVDERRKLGAVIGLSPEQIKIWFQNRRFKLRKEK) form a DNA-binding region, homeobox. Residues 220–234 (SAKEEAEEDQKHVIS) show a composition bias toward basic and acidic residues.

It belongs to the NK-2 homeobox family.

The protein localises to the nucleus. Functionally, required for mesoderm development, including specification of muscle and coelomocyte precursors. The protein is Homeobox protein ceh-51 of Caenorhabditis elegans.